The following is a 323-amino-acid chain: Aspartate carbamoyltransferase catalytic subunit (323 aa).

Residues R61 and T62 each contribute to the carbamoyl phosphate site. K89 contacts L-aspartate. Carbamoyl phosphate-binding residues include R111, H144, and Q147. L-aspartate is bound by residues R184 and R238. 2 residues coordinate carbamoyl phosphate: G279 and P280.

The protein belongs to the aspartate/ornithine carbamoyltransferase superfamily. ATCase family. In terms of assembly, heterododecamer (2C3:3R2) of six catalytic PyrB chains organized as two trimers (C3), and six regulatory PyrI chains organized as three dimers (R2).

The enzyme catalyses carbamoyl phosphate + L-aspartate = N-carbamoyl-L-aspartate + phosphate + H(+). It participates in pyrimidine metabolism; UMP biosynthesis via de novo pathway; (S)-dihydroorotate from bicarbonate: step 2/3. Functionally, catalyzes the condensation of carbamoyl phosphate and aspartate to form carbamoyl aspartate and inorganic phosphate, the committed step in the de novo pyrimidine nucleotide biosynthesis pathway. This is Aspartate carbamoyltransferase catalytic subunit from Acaryochloris marina (strain MBIC 11017).